Consider the following 652-residue polypeptide: tRNA 5-methylaminomethyl-2-thiouridine biosynthesis bifunctional protein MnmC (652 aa).

The segment at 1–227 is tRNA (mnm(5)s(2)U34)-methyltransferase; the sequence is MLSWKNDLTP…KREMLTGKYS (227 aa). Residues 259 to 652 are FAD-dependent cmnm(5)s(2)U34 oxidoreductase; sequence IGAGIAGSTL…ARFLYRRIRK (394 aa).

The protein in the N-terminal section; belongs to the methyltransferase superfamily. tRNA (mnm(5)s(2)U34)-methyltransferase family. In the C-terminal section; belongs to the DAO family. The cofactor is FAD.

Its subcellular location is the cytoplasm. The enzyme catalyses 5-aminomethyl-2-thiouridine(34) in tRNA + S-adenosyl-L-methionine = 5-methylaminomethyl-2-thiouridine(34) in tRNA + S-adenosyl-L-homocysteine + H(+). In terms of biological role, catalyzes the last two steps in the biosynthesis of 5-methylaminomethyl-2-thiouridine (mnm(5)s(2)U) at the wobble position (U34) in tRNA. Catalyzes the FAD-dependent demodification of cmnm(5)s(2)U34 to nm(5)s(2)U34, followed by the transfer of a methyl group from S-adenosyl-L-methionine to nm(5)s(2)U34, to form mnm(5)s(2)U34. In Leptospira borgpetersenii serovar Hardjo-bovis (strain JB197), this protein is tRNA 5-methylaminomethyl-2-thiouridine biosynthesis bifunctional protein MnmC.